We begin with the raw amino-acid sequence, 91 residues long: Acylphosphatase (91 aa).

In terms of domain architecture, Acylphosphatase-like spans 5-91 (CLHAYVGGRV…QGIAGFIVRR (87 aa)). Catalysis depends on residues Arg-20 and Asn-38.

The protein belongs to the acylphosphatase family.

The enzyme catalyses an acyl phosphate + H2O = a carboxylate + phosphate + H(+). The sequence is that of Acylphosphatase (acyP) from Pseudomonas paraeruginosa (strain DSM 24068 / PA7) (Pseudomonas aeruginosa (strain PA7)).